The chain runs to 148 residues: Outer envelope pore protein 16-1, chloroplastic (148 aa).

Residues 2–73 (PSSTFSGTVS…EHALKKLCKE (72 aa)) form a contains 4 beta strands region. 3 helical membrane passes run 75 to 91 (VYWG…EYGI), 102 to 118 (NAML…SAVG), and 125 to 142 (IVID…SQFV).

This sequence belongs to the Tim17/Tim22/Tim23 family. Plastid outer envelope porin OEP16 (TC 1.B.30) subfamily. As to quaternary structure, homodimer and oligomers in membrane. Forms large complexes including TOC33, pPORA and OEP161 during pPORA import into plastids at the plastid envelope membrane. As to expression, expressed predominantly in leaves and cotyledons.

The protein localises to the plastid. It is found in the chloroplast outer membrane. Its subcellular location is the etioplast membrane. Stimulated by GTP. Voltage-dependent high-conductance channel with a slight cation-selectivity; selective for amino acids but excludes triosephosphates or uncharged sugars. Non-essential amino acid-selective channel protein and translocation pore for NADPH:protochlorophyllide oxidoreductase A (PORA) and possibly PORB. Involved in PORA precursor (pPORA) import and thus confers photoprotection onto etiolated seedlings during greening. The polypeptide is Outer envelope pore protein 16-1, chloroplastic (OEP161) (Arabidopsis thaliana (Mouse-ear cress)).